A 221-amino-acid chain; its full sequence is GTP-binding nuclear protein Ran-3 (221 aa).

One can recognise a Small GTPase Ran-type domain in the interval 10 to 174 (DYPSFKLVIV…LYLARKLAGD (165 aa)). A GTP-binding site is contributed by 21–28 (DGGTGKTT). The segment at 40 to 48 (KKYEPTIGV) is switch-I. Residues Gly-71, 125 to 128 (NKVD), and 153 to 155 (SAK) contribute to the GTP site. Residues 71 to 87 (GQEKFGGLRDGYYIHGQ) form a switch-II region. The interval 201 to 221 (EAELAAAASQPLPDDDDDTFE) is disordered.

This sequence belongs to the small GTPase superfamily. Ran family. Found in a nuclear export complex with RanGTP, exportin and pre-miRNA. Interacts with RanBP1a and RanBP1b. Interacts with KPNB1.

Its subcellular location is the nucleus. GTP-binding protein involved in nucleocytoplasmic transport. Required for the import of protein into the nucleus and also for RNA export. Involved in chromatin condensation and control of cell cycle. The protein is GTP-binding nuclear protein Ran-3 (RAN3) of Arabidopsis thaliana (Mouse-ear cress).